A 237-amino-acid chain; its full sequence is HTH-type transcriptional regulator GmuR (237 aa).

The HTH gntR-type domain maps to 1–69; sequence MNKYEIIANE…RGHGTFIIQS (69 aa). The H-T-H motif DNA-binding region spans 29–48; sequence EVSLAKEFNSSRMTMKRALD.

It localises to the cytoplasm. Functionally, transcriptional repressor of the gmuBACDREFG operon which is involved in the uptake and degradation of glucomannan. In Bacillus subtilis (strain 168), this protein is HTH-type transcriptional regulator GmuR (gmuR).